The chain runs to 1179 residues: Protein FAM83H (1179 aa).

A DUF1669 region spans residues Met1–Pro286. The interval Met1–Pro286 is mediates interaction with CSNK1A1 and is required for FAM83H activity in keratin cytoskeleton organization. At Thr465 the chain carries Phosphothreonine. Disordered stretches follow at residues Ala484–Gly577 and Phe636–Arg669. Phosphoserine occurs at positions 513, 514, 516, 523, 647, and 667. Thr756 is modified (phosphothreonine). 3 positions are modified to phosphoserine: Ser759, Ser785, and Ser813. The interval Arg830–Ala1026 is disordered. The span at Leu836–Gly847 shows a compositional bias: polar residues. Phosphoserine is present on residues Ser870 and Ser881. Position 883 is a phosphothreonine (Thr883). Over residues Pro884–Ser906 the composition is skewed to polar residues. Phosphoserine is present on Ser892. Residue Thr894 is modified to Phosphothreonine. 9 positions are modified to phosphoserine: Ser903, Ser914, Ser925, Ser936, Ser945, Ser1003, Ser1009, Ser1024, and Ser1025. The residue at position 1040 (Thr1040) is a Phosphothreonine. Disordered stretches follow at residues Ile1047–Met1084 and Glu1143–Gly1165. Phosphoserine is present on residues Ser1048, Ser1068, and Ser1147.

The protein belongs to the FAM83 family. As to quaternary structure, directly interacts (via DUF1669) with casein kinase isoforms CSNK1A1, CSNK1A1L, CSNK1D and CSNK1E. Interaction with CSNK1A1 recruits CSNK1A1 to keratin filaments. Interacts with KRT18 and probably other keratins. Expressed in the tooth follicle.

The protein localises to the cytoplasm. It localises to the cytoskeleton. May play a major role in the structural organization and calcification of developing enamel. May play a role in keratin cytoskeleton disassembly by recruiting CSNK1A1 to keratin filaments. Thereby, it may regulate epithelial cell migration. This is Protein FAM83H from Homo sapiens (Human).